Consider the following 433-residue polypeptide: Protein translocase subunit SecY (433 aa).

A run of 10 helical transmembrane segments spans residues 17-37, 71-91, 117-137, 141-161, 184-204, 212-232, 268-288, 310-330, 366-386, and 388-408; these read IIFT…PIPG, IFAL…LMSV, LTVL…ESMV, GPVV…TLVV, LIIF…MFEL, PLIA…IIFF, GVIP…LANF, YILL…AIVF, LTVI…LLMN, and YVIS…VVLD.

The protein belongs to the SecY/SEC61-alpha family. Component of the Sec protein translocase complex. Heterotrimer consisting of SecY, SecE and SecG subunits. The heterotrimers can form oligomers, although 1 heterotrimer is thought to be able to translocate proteins. Interacts with the ribosome. Interacts with SecDF, and other proteins may be involved. Interacts with SecA.

It localises to the cell inner membrane. Its function is as follows. The central subunit of the protein translocation channel SecYEG. Consists of two halves formed by TMs 1-5 and 6-10. These two domains form a lateral gate at the front which open onto the bilayer between TMs 2 and 7, and are clamped together by SecE at the back. The channel is closed by both a pore ring composed of hydrophobic SecY resides and a short helix (helix 2A) on the extracellular side of the membrane which forms a plug. The plug probably moves laterally to allow the channel to open. The ring and the pore may move independently. The sequence is that of Protein translocase subunit SecY from Rickettsia typhi (strain ATCC VR-144 / Wilmington).